Reading from the N-terminus, the 548-residue chain is CBS domain-containing protein CBSCBSPB4 (548 aa).

A compositionally biased stretch (polar residues) spans 1–18 (MANQGGPSRKSLSFSGHS). Positions 1–58 (MANQGGPSRKSLSFSGHSFQGRKKASENEGGGGGGSDLLPRRSLTSSRSSISLSGERS) are disordered. Serine 18 is subject to Phosphoserine. Positions 37-56 (DLLPRRSLTSSRSSISLSGE) are enriched in low complexity. CBS domains lie at 63 to 126 (VKRL…NLEE), 133 to 190 (MTKN…ERSV), 233 to 293 (IIPE…LPQE), and 301 to 358 (MTPN…AGST). A PB1 domain is found at 411 to 498 (PNTFAFKLQD…KGLKLHLDYT (88 aa)). A helical transmembrane segment spans residues 521–543 (AAAYKTVAAGAALAAGLGVLVYL).

It localises to the membrane. This is CBS domain-containing protein CBSCBSPB4 (CBSCBSPB4) from Arabidopsis thaliana (Mouse-ear cress).